The sequence spans 504 residues: Glucose-6-phosphate isomerase (504 aa).

Glu-333 functions as the Proton donor in the catalytic mechanism. Catalysis depends on residues His-364 and Lys-473.

It belongs to the GPI family.

It is found in the cytoplasm. The catalysed reaction is alpha-D-glucose 6-phosphate = beta-D-fructose 6-phosphate. The protein operates within carbohydrate biosynthesis; gluconeogenesis. It functions in the pathway carbohydrate degradation; glycolysis; D-glyceraldehyde 3-phosphate and glycerone phosphate from D-glucose: step 2/4. Its function is as follows. Catalyzes the reversible isomerization of glucose-6-phosphate to fructose-6-phosphate. This chain is Glucose-6-phosphate isomerase, found in Xanthomonas oryzae pv. oryzae (strain MAFF 311018).